A 456-amino-acid chain; its full sequence is tRNA modification GTPase MnmE (456 aa).

Residues R24, E81, and K120 each contribute to the (6S)-5-formyl-5,6,7,8-tetrahydrofolate site. The TrmE-type G domain maps to 216–379 (GMKVVIAGRP…LREHLKECIG (164 aa)). N226 contacts K(+). GTP is bound by residues 226–231 (NAGKSS), 245–251 (TAIEGTT), and 270–273 (DTAG). S230 lines the Mg(2+) pocket. Residues T245, I247, and T250 each coordinate K(+). Position 251 (T251) interacts with Mg(2+). K456 is a (6S)-5-formyl-5,6,7,8-tetrahydrofolate binding site.

It belongs to the TRAFAC class TrmE-Era-EngA-EngB-Septin-like GTPase superfamily. TrmE GTPase family. As to quaternary structure, homodimer. Heterotetramer of two MnmE and two MnmG subunits. K(+) is required as a cofactor.

The protein localises to the cytoplasm. In terms of biological role, exhibits a very high intrinsic GTPase hydrolysis rate. Involved in the addition of a carboxymethylaminomethyl (cmnm) group at the wobble position (U34) of certain tRNAs, forming tRNA-cmnm(5)s(2)U34. This is tRNA modification GTPase MnmE from Marinobacter nauticus (strain ATCC 700491 / DSM 11845 / VT8) (Marinobacter aquaeolei).